The primary structure comprises 387 residues: Phosphoglycerate kinase (387 aa).

Substrate contacts are provided by residues 21–23 (DLN), Arg-36, and 59–62 (HLGR). Residue Lys-84 is modified to N6-acetyllysine. Substrate-binding residues include Arg-113 and Arg-146. ATP is bound by residues Lys-197, Glu-314, and 340 to 343 (GGDT).

It belongs to the phosphoglycerate kinase family. In terms of assembly, monomer.

It localises to the cytoplasm. It carries out the reaction (2R)-3-phosphoglycerate + ATP = (2R)-3-phospho-glyceroyl phosphate + ADP. The protein operates within carbohydrate degradation; glycolysis; pyruvate from D-glyceraldehyde 3-phosphate: step 2/5. This is Phosphoglycerate kinase from Shigella sonnei (strain Ss046).